The primary structure comprises 623 residues: Xaa-Pro aminopeptidase 1 (623 aa).

A peptide is bound at residue R77. K304 carries the post-translational modification N6-acetyllysine. H395 provides a ligand contact to a peptide. Positions 415, 426, and 489 each coordinate Mn(2+). 3 residues coordinate a peptide: H489, H498, and E523. Mn(2+) contacts are provided by E523 and E537.

The protein belongs to the peptidase M24B family. As to quaternary structure, homodimer. The cofactor is Mn(2+).

It is found in the cytoplasm. The protein localises to the cytosol. The catalysed reaction is Release of any N-terminal amino acid, including proline, that is linked to proline, even from a dipeptide or tripeptide.. Functionally, metalloaminopeptidase that catalyzes the removal of a penultimate prolyl residue from the N-termini of peptides, such as Arg-Pro-Pro. Contributes to the degradation of bradykinin. In Bos taurus (Bovine), this protein is Xaa-Pro aminopeptidase 1 (XPNPEP1).